Consider the following 382-residue polypeptide: Alpha-2B adrenergic receptor (382 aa).

A helical membrane pass occupies residues 1-25; that stretch reads AIAAVITFLILFTIFGNALVILAVL. The Cytoplasmic portion of the chain corresponds to 26–36; the sequence is TSRSLRAPQNL. Residues 37-62 traverse the membrane as a helical segment; sequence FLVSLAAADILVATLIIPFSLANELL. The Extracellular portion of the chain corresponds to 63–72; that stretch reads GYWYFRHTWC. Cysteine 72 and cysteine 151 are disulfide-bonded. A helical transmembrane segment spans residues 73 to 95; sequence EVYLALDVLFCTSSIVHLCAISL. The Cytoplasmic portion of the chain corresponds to 96–117; sequence DRYWSVSRALEYNSKRTPRRIK. A helical membrane pass occupies residues 118-140; sequence GIILTVWLIAAFISLPPLIYKGD. The Extracellular portion of the chain corresponds to 141–156; it reads KGKKPGGRPQCKLNEE. A helical transmembrane segment spans residues 157–180; the sequence is AWYILSSSIGSFFAPCLIMILVYL. Over 181 to 346 the chain is Cytoplasmic; it reads RIYLIAKRRN…MNREKRFTFV (166 aa). The tract at residues 192-305 is disordered; sequence QGPHGKQAPG…QGTPNFQPSQ (114 aa). Residues 271–284 are compositionally biased toward acidic residues; it reads EEEEEEEEEEEEEC. Positions 291-305 are enriched in polar residues; the sequence is TSSSLQGTPNFQPSQ. Residues 347–370 form a helical membrane-spanning segment; it reads LAVVIGVFVLCWFPFFFSYSLGAI. Topologically, residues 371 to 379 are extracellular; that stretch reads CPQHCKVPH. Residues 380-382 form a helical membrane-spanning segment; that stretch reads GLF.

It belongs to the G-protein coupled receptor 1 family. Adrenergic receptor subfamily. ADRA2B sub-subfamily. In terms of assembly, interacts with RAB26. Interacts with PPP1R9B. Interacts with GGA1, GGA2 and GGA3.

It is found in the cell membrane. Its function is as follows. Alpha-2 adrenergic receptors mediate the catecholamine-induced inhibition of adenylate cyclase through the action of G proteins. This chain is Alpha-2B adrenergic receptor (ADRA2B), found in Didelphis virginiana (North American opossum).